The following is a 535-amino-acid chain: Cytochrome c oxidase subunit 1 (535 aa).

A helical membrane pass occupies residues 21–43 (VLYFIFALFSAMIGTGLSAIIRL). Residues Glu-44 and Gly-49 each coordinate Ca(2+). 6 helical membrane passes run 63-85 (VITA…GGFG), 106-128 (ISFW…EAGA), 153-175 (IFSL…TTFI), 188-210 (PLFA…VLAA), 242-264 (YWWN…SHAV), and 271-293 (PVFG…FCVW). His-67 is a Fe(II)-heme a binding site. His-246 serves as a coordination point for Cu cation. Positions 246–250 (HPEVY) form a cross-link, 1'-histidyl-3'-tyrosine (His-Tyr). Position 250 (Tyr-250) interacts with O2. Cu cation contacts are provided by His-295 and His-296. 2 consecutive transmembrane segments (helical) span residues 308-330 (AYFT…SWLA) and 342-364 (TALF…VVLA). Residues His-373 and Asp-374 each contribute to the Mg(2+) site. 3 helical membrane passes run 379–401 (VAHF…WYLW), 414–436 (LSHI…MHFL), and 456–478 (NQVA…YVVY). His-381 is a heme a3 binding site. Fe(II)-heme a is bound at residue His-383.

This sequence belongs to the heme-copper respiratory oxidase family. Component of the cytochrome c oxidase (complex IV, CIV), a multisubunit enzyme composed of a catalytic core of 3 subunits and several supernumerary subunits. The complex exists as a monomer or a dimer and forms supercomplexes (SCs) in the inner mitochondrial membrane with ubiquinol-cytochrome c oxidoreductase (cytochrome b-c1 complex, complex III, CIII). Heme is required as a cofactor. The cofactor is Cu cation.

It is found in the mitochondrion inner membrane. It carries out the reaction 4 Fe(II)-[cytochrome c] + O2 + 8 H(+)(in) = 4 Fe(III)-[cytochrome c] + 2 H2O + 4 H(+)(out). It functions in the pathway energy metabolism; oxidative phosphorylation. Functionally, component of the cytochrome c oxidase, the last enzyme in the mitochondrial electron transport chain which drives oxidative phosphorylation. The respiratory chain contains 3 multisubunit complexes succinate dehydrogenase (complex II, CII), ubiquinol-cytochrome c oxidoreductase (cytochrome b-c1 complex, complex III, CIII) and cytochrome c oxidase (complex IV, CIV), that cooperate to transfer electrons derived from NADH and succinate to molecular oxygen, creating an electrochemical gradient over the inner membrane that drives transmembrane transport and the ATP synthase. Cytochrome c oxidase is the component of the respiratory chain that catalyzes the reduction of oxygen to water. Electrons originating from reduced cytochrome c in the intermembrane space (IMS) are transferred via the dinuclear copper A center (CU(A)) of subunit 2 and heme A of subunit 1 to the active site in subunit 1, a binuclear center (BNC) formed by heme A3 and copper B (CU(B)). The BNC reduces molecular oxygen to 2 water molecules using 4 electrons from cytochrome c in the IMS and 4 protons from the mitochondrial matrix. In Yarrowia lipolytica (strain CLIB 122 / E 150) (Yeast), this protein is Cytochrome c oxidase subunit 1 (COX1).